A 438-amino-acid chain; its full sequence is Minor myo-inositol transporter IolF (438 aa).

12 consecutive transmembrane segments (helical) span residues 15-35, 49-69, 86-106, 108-128, 147-167, 171-191, 230-250, 268-288, 295-312, 317-334, 359-379, and 387-407; these read IAAA…SAGL, IGLL…ALLG, MLVY…PMLL, GYII…TIIA, WAAG…LGLL, IVFA…IRLP, ILFL…MGFF, LLQM…FMPF, TVFG…TLFL, GLPI…NNGA, LMFF…PMII, and MAAI…LFAP.

The protein belongs to the major facilitator superfamily. Sugar transporter (TC 2.A.1.1) family.

The protein resides in the cell membrane. Its pathway is polyol metabolism; myo-inositol degradation into acetyl-CoA. Functionally, minor myo-inositol uptake transporter. In Bacillus subtilis (strain 168), this protein is Minor myo-inositol transporter IolF (iolF).